A 229-amino-acid chain; its full sequence is Ras-related protein RABA6b (229 aa).

Residue 20 to 27 (GDSAVGKS) participates in GTP binding. Residues 42–50 (SKPTIGVDF) carry the Effector region motif. Residues 68–72 (DTAGQ), 126–129 (NKSD), and 156–157 (SA) each bind GTP. Residues cysteine 226 and cysteine 227 are each lipidated (S-geranylgeranyl cysteine).

The protein belongs to the small GTPase superfamily. Rab family.

The protein resides in the cell membrane. Functionally, intracellular vesicle trafficking and protein transport. This chain is Ras-related protein RABA6b (RABA6B), found in Arabidopsis thaliana (Mouse-ear cress).